A 45-amino-acid polypeptide reads, in one-letter code: Psychimicin (45 aa).

Disulfide bonds link Cys10-Cys24, Cys14-Cys36, and Cys25-Cys42.

In terms of assembly, monomer. As to expression, hemolymph.

It localises to the secreted. Has antimicrobial activity. Is particularly active against fungi, and to a lesser extent against Gram-positive and Gram-negative bacteria. In Oiketicus kirbyi (Bagworm moth), this protein is Psychimicin.